We begin with the raw amino-acid sequence, 95 residues long: Large ribosomal subunit protein uL23 (95 aa).

The protein belongs to the universal ribosomal protein uL23 family. As to quaternary structure, part of the 50S ribosomal subunit. Contacts protein L29, and trigger factor when it is bound to the ribosome.

One of the early assembly proteins it binds 23S rRNA. One of the proteins that surrounds the polypeptide exit tunnel on the outside of the ribosome. Forms the main docking site for trigger factor binding to the ribosome. The sequence is that of Large ribosomal subunit protein uL23 from Desulfatibacillum aliphaticivorans.